The sequence spans 250 residues: Indole-3-glycerol phosphate synthase (250 aa).

Belongs to the TrpC family.

The enzyme catalyses 1-(2-carboxyphenylamino)-1-deoxy-D-ribulose 5-phosphate + H(+) = (1S,2R)-1-C-(indol-3-yl)glycerol 3-phosphate + CO2 + H2O. It functions in the pathway amino-acid biosynthesis; L-tryptophan biosynthesis; L-tryptophan from chorismate: step 4/5. The polypeptide is Indole-3-glycerol phosphate synthase (Picrophilus torridus (strain ATCC 700027 / DSM 9790 / JCM 10055 / NBRC 100828 / KAW 2/3)).